We begin with the raw amino-acid sequence, 461 residues long: uncharacterized protein (461 aa).

LRR repeat units lie at residues 119–140, 141–162, and 163–184; these read NVKK…EKMS, LLEV…QHCK, and NLKE…EYLK. An LRRCT domain is found at 197 to 237; it reads NPCVGEGGQEYRRKVIRVLPNLTKLDDKPVTTTDHQEAIED.

This is an uncharacterized protein from Caenorhabditis elegans.